We begin with the raw amino-acid sequence, 1220 residues long: Protein transport protein Sec31A (1220 aa).

WD repeat units follow at residues 4–47 (KEVD…EIFE), 68–111 (RYHK…AGDK), 120–160 (KHTG…TPMT), 166–206 (QPPE…PIIK), 209–254 (DHSN…SPLR), 258–298 (NHAR…VLYE), and 301–342 (TNTQ…DGLR). Residues 161–471 (PGAKTQPPED…IDASQTEFEK (311 aa)) are interaction with SEC13. The WD 8; interaction with SEC13 repeat unit spans residues 397 to 430 (SFSFGGKLVTFENVRMPSHQGAEQQQQQHHVFIS). 2 positions are modified to phosphoserine: S527 and S532. K647 participates in a covalent cross-link: Glycyl lysine isopeptide (Lys-Gly) (interchain with G-Cter in ubiquitin). Disordered stretches follow at residues 791-908 (GEPV…NAYP) and 924-1096 (QLYA…GNTF). Position 799 is a phosphoserine (S799). The tract at residues 800 to 1113 (PKIPYEKQQL…TKKITKKPIP (314 aa)) is interaction with PDCD6. The ALG-2-binding site motif-2 (ABS-2) motif lies at 842–848 (GFIMHGN). A compositionally biased stretch (polar residues) spans 849-859 (VNPNAAGQLPT). The segment covering 869 to 882 (PPYPQPQPYQPAQP) has biased composition (pro residues). Positions 962 to 972 (PSSSAYALPPG) are enriched in low complexity. 2 stretches are compositionally biased toward polar residues: residues 984-995 (PASQRTGPQNGW) and 1031-1053 (PQSQMLQQQPSAPVPLSSQSSFP). Position 1161 is a phosphothreonine (T1161). Phosphoserine is present on S1163. K1217 participates in a covalent cross-link: Glycyl lysine isopeptide (Lys-Gly) (interchain with G-Cter in ubiquitin).

This sequence belongs to the WD repeat SEC31 family. In terms of assembly, COPII is composed of at least 5 proteins: the SEC23/24 complex, the SEC13/31 complex and SAR1. SEC13 and SEC31 make a 2:2 tetramer that forms the edge element of the COPII outer coat. The tetramer self-assembles in multiple copies to form the complete polyhedral cage. Interacts (via WD 8) with SEC13. Interacts with PDCD6; interaction takes place in response to cytosolic calcium increase and leads to bridge together the BCR(KLHL12) complex and SEC31A, leading to monoubiquitination. Interacts with KLHL12. In terms of processing, monoubiquitinated by the BCR(KLHL12) E3 ubiquitin ligase complex, leading to regulate the size of COPII coats. Abundantly and ubiquitously expressed.

It localises to the cytoplasm. The protein resides in the cytoplasmic vesicle. Its subcellular location is the COPII-coated vesicle membrane. It is found in the endoplasmic reticulum membrane. The protein localises to the cytosol. Its function is as follows. Component of the coat protein complex II (COPII) which promotes the formation of transport vesicles from the endoplasmic reticulum (ER). The coat has two main functions, the physical deformation of the endoplasmic reticulum membrane into vesicles and the selection of cargo molecules. This Homo sapiens (Human) protein is Protein transport protein Sec31A (SEC31A).